The following is an 81-amino-acid chain: Photosystem I iron-sulfur center (81 aa).

4Fe-4S ferredoxin-type domains lie at 2–31 (SHAVKIYDTCIGCTQCVRACPTDVLEMVPW) and 39–68 (IASAPRTEDCVGCKRCEAACPTDFLSVRVY). Residues Cys-11, Cys-14, Cys-17, Cys-21, Cys-48, Cys-51, Cys-54, and Cys-58 each contribute to the [4Fe-4S] cluster site.

As to quaternary structure, the eukaryotic PSI reaction center is composed of at least 11 subunits. It depends on [4Fe-4S] cluster as a cofactor.

It localises to the plastid. The protein localises to the chloroplast thylakoid membrane. The catalysed reaction is reduced [plastocyanin] + hnu + oxidized [2Fe-2S]-[ferredoxin] = oxidized [plastocyanin] + reduced [2Fe-2S]-[ferredoxin]. Apoprotein for the two 4Fe-4S centers FA and FB of photosystem I (PSI); essential for photochemical activity. FB is the terminal electron acceptor of PSI, donating electrons to ferredoxin. The C-terminus interacts with PsaA/B/D and helps assemble the protein into the PSI complex. Required for binding of PsaD and PsaE to PSI. PSI is a plastocyanin/cytochrome c6-ferredoxin oxidoreductase, converting photonic excitation into a charge separation, which transfers an electron from the donor P700 chlorophyll pair to the spectroscopically characterized acceptors A0, A1, FX, FA and FB in turn. In Ostreococcus tauri, this protein is Photosystem I iron-sulfur center.